Here is a 269-residue protein sequence, read N- to C-terminus: Triosephosphate isomerase (269 aa).

8–10 (NWK) lines the substrate pocket. His-105 functions as the Electrophile in the catalytic mechanism. Glu-183 (proton acceptor) is an active-site residue. Substrate contacts are provided by residues Gly-189, Ser-227, and 248–249 (GG).

It belongs to the triosephosphate isomerase family. As to quaternary structure, homodimer.

The protein localises to the cytoplasm. It catalyses the reaction D-glyceraldehyde 3-phosphate = dihydroxyacetone phosphate. Its pathway is carbohydrate biosynthesis; gluconeogenesis. The protein operates within carbohydrate degradation; glycolysis; D-glyceraldehyde 3-phosphate from glycerone phosphate: step 1/1. Functionally, involved in the gluconeogenesis. Catalyzes stereospecifically the conversion of dihydroxyacetone phosphate (DHAP) to D-glyceraldehyde-3-phosphate (G3P). The chain is Triosephosphate isomerase from Psychrobacter arcticus (strain DSM 17307 / VKM B-2377 / 273-4).